Reading from the N-terminus, the 137-residue chain is Transcription antitermination protein NusB (137 aa).

The protein belongs to the NusB family.

In terms of biological role, involved in transcription antitermination. Required for transcription of ribosomal RNA (rRNA) genes. Binds specifically to the boxA antiterminator sequence of the ribosomal RNA (rrn) operons. The protein is Transcription antitermination protein NusB of Clavibacter sepedonicus (Clavibacter michiganensis subsp. sepedonicus).